The chain runs to 337 residues: Glyceraldehyde-3-phosphate dehydrogenase (337 aa).

NADP(+) is bound by residues 11-12 (TV), 34-35 (TR), and G110. D-glyceraldehyde 3-phosphate is bound at residue 139–141 (SCN). C140 acts as the Nucleophile in catalysis. D171 is an NADP(+) binding site. A D-glyceraldehyde 3-phosphate-binding site is contributed by 194–195 (HG). Q300 provides a ligand contact to NADP(+).

This sequence belongs to the glyceraldehyde-3-phosphate dehydrogenase family. As to quaternary structure, homotetramer.

It localises to the cytoplasm. The catalysed reaction is D-glyceraldehyde 3-phosphate + phosphate + NADP(+) = (2R)-3-phospho-glyceroyl phosphate + NADPH + H(+). It catalyses the reaction D-glyceraldehyde 3-phosphate + phosphate + NAD(+) = (2R)-3-phospho-glyceroyl phosphate + NADH + H(+). It participates in carbohydrate degradation; glycolysis; pyruvate from D-glyceraldehyde 3-phosphate: step 1/5. Functionally, exhibits a dual-cofactor specificity, with a marked preference for NADP(+) over NAD(+). The protein is Glyceraldehyde-3-phosphate dehydrogenase (gap) of Methanothermus fervidus.